Consider the following 978-residue polypeptide: Alanine--tRNA ligase, chloroplastic/mitochondrial (978 aa).

Zn(2+)-binding residues include histidine 655, histidine 659, cysteine 758, and histidine 762. Lysine 773 is covalently cross-linked (Glycyl lysine isopeptide (Lys-Gly) (interchain with G-Cter in ubiquitin)).

The protein belongs to the class-II aminoacyl-tRNA synthetase family. As to quaternary structure, monomer. Zn(2+) serves as cofactor.

It is found in the plastid. The protein resides in the chloroplast. The protein localises to the mitochondrion. The catalysed reaction is tRNA(Ala) + L-alanine + ATP = L-alanyl-tRNA(Ala) + AMP + diphosphate. In terms of biological role, catalyzes the attachment of alanine to tRNA(Ala) in a two-step reaction: alanine is first activated by ATP to form Ala-AMP and then transferred to the acceptor end of tRNA(Ala). Also edits incorrectly charged tRNA(Ala) via its editing domain. This chain is Alanine--tRNA ligase, chloroplastic/mitochondrial (EMB86), found in Arabidopsis thaliana (Mouse-ear cress).